We begin with the raw amino-acid sequence, 341 residues long: MNLITLENFLDNSSFLILLLTMLIYWAGAAFPGMSILPTLGTAGVAIANLSIATLLGSRWLEGGYFPLSNLYESLFFLAWGVTAVHLIAEKMSRSTLVGVVTTPVAMGITAFAALSLPADMQTSAPLVPALKSNWLMMHVSVMMLSYATLMVGAVLAIAFLIVTRGQDVELRGSSVGTGSYRNKLGRIQLSQAEKTPDGSVVAMADGNGSVGTAVLDRVDPQTLVTDLPNLSPQRLNLADTLDNISYRIIGLGFPLLTIGIIAGAVWANEAWGSYWSWDPKETWALITWLVFAAYLHARITRGWQGRKPAILAASGFIVVWVCYLGVNLLGKGLHSYGWFF.

8 helical membrane-spanning segments follow: residues 16–36, 37–57, 68–88, 97–117, 142–162, 249–269, 276–296, and 310–330; these read LILL…GMSI, LPTL…TLLG, LSNL…VHLI, LVGV…ALSL, VMML…AFLI, IIGL…VWAN, WSWD…AAYL, and AILA…VNLL.

This sequence belongs to the CcmF/CycK/Ccl1/NrfE/CcsA family. As to quaternary structure, may interact with ccs1.

It localises to the cellular thylakoid membrane. Required during biogenesis of c-type cytochromes (cytochrome c6 and cytochrome f) at the step of heme attachment. In Rippkaea orientalis (strain PCC 8801 / RF-1) (Cyanothece sp. (strain PCC 8801)), this protein is Cytochrome c biogenesis protein CcsA.